Here is a 68-residue protein sequence, read N- to C-terminus: Metallothionein (68 aa).

It belongs to the metallothionein superfamily. Type 4 family.

Metallothioneins have a high content of cysteine residues that bind various heavy metals. In Lytechinus pictus (Painted sea urchin), this protein is Metallothionein (MT1).